Consider the following 955-residue polypeptide: Reversion-inducing cysteine-rich protein with Kazal motifs (955 aa).

Residues 1–22 (MSGCLQILTVLLCCRFWALVFS) form the signal peptide. The Knot 1 repeat unit spans residues 28–75 (CVHHAADIPRCRDACEQLASIRSESRLRHLLHRLPSYCPETLSELWIC). Residues 28-326 (CVHHAADIPR…NPVEMDLITC (299 aa)) are 5 X Knot repeats. Asn-77 is a glycosylation site (N-linked (GlcNAc...) asparagine). Knot repeat units lie at residues 95 to 132 (CCEL…LYSC) and 142 to 188 (CCSY…LILC). Asn-191 carries an N-linked (GlcNAc...) asparagine glycan. 2 Knot repeats span residues 207–254 (CCDR…LWQC) and 282–326 (CCFK…LITC). 2 N-linked (GlcNAc...) asparagine glycosylation sites follow: Asn-287 and Asn-375. Kazal-like domains lie at 615 to 661 (LFTG…SCRS), 686 to 741 (DLSE…HCQD), and 742 to 778 (ACRR…RCHA). 5 disulfides stabilise this stretch: Cys-621-Cys-646, Cys-623-Cys-642, Cys-631-Cys-659, Cys-704-Cys-724, and Cys-713-Cys-739. Ser-931 carries the GPI-anchor amidated serine lipid modification. Positions 932–955 (SCVSISVCVLLLLCSLILTLTSDL) are excised as a propeptide.

Belongs to the RECK family. In terms of assembly, interacts (via knot repeats) with wnt7a (via disordered linker region); the interaction is direct. Interacts (via knot repeats) with wnt7b (via disordered linker region); the interaction is direct. Interacts with adgra2; the interaction is direct. Expressed in the cerebral endothelium.

It is found in the cell membrane. Its function is as follows. Functions together with adgra2 to enable brain endothelial cells to selectively respond to Wnt7 signals (wnt7a or wnt7b). Plays a key role in Wnt7-specific responses: required for central nervous system (CNS) angiogenesis and blood-brain barrier regulation. Acts as a Wnt7-specific coactivator of canonical Wnt signaling by decoding Wnt ligands: acts by interacting specifically with the disordered linker region of Wnt7, thereby conferring ligand selectivity for Wnt7. Adgra2 is then required to deliver reck-bound Wnt7 to frizzled by assembling a higher-order RECK-ADGRA2-Fzd-LRP5-LRP6 complex. Also acts as a serine protease inhibitor. This chain is Reversion-inducing cysteine-rich protein with Kazal motifs, found in Danio rerio (Zebrafish).